Reading from the N-terminus, the 191-residue chain is Thiol:disulfide interchange protein TxlA (191 aa).

A helical transmembrane segment spans residues 14–30 (ILVIAAALVLTILVVLG). One can recognise a Thioredoxin domain in the interval 27-148 (VVLGSRQPSA…LAANLDALVE (122 aa)). An intrachain disulfide couples C69 to C72. The segment covering 165–185 (SADLQPSRSSQTDPRSHSGQV) has biased composition (polar residues). Positions 165–191 (SADLQPSRSSQTDPRSHSGQVQDGVLD) are disordered.

It belongs to the thioredoxin family.

The protein localises to the cell membrane. In terms of biological role, required for disulfide bond formation in some proteins. Acts by transferring its disulfide bond to other proteins and is reduced in the process. The polypeptide is Thiol:disulfide interchange protein TxlA (txlA) (Synechococcus elongatus (strain ATCC 33912 / PCC 7942 / FACHB-805) (Anacystis nidulans R2)).